A 185-amino-acid chain; its full sequence is Transcription factor bHLH109 (185 aa).

Residues 67-117 (RSMEYRMMMEKKRRKEIKDKVDILQGLMPNHCTKPDLASKLENIIEYIKSL) enclose the bHLH domain.

Belongs to the bHLH protein family. In terms of assembly, homodimer.

The protein localises to the nucleus. Functionally, transcription factor involved in somatic embryogenesis. Acts as a positive regulator of somatic embryo formation. Acts as a positive regulator of ECP63 by targeting its promoter and inducing its expression. The chain is Transcription factor bHLH109 (BHLH109) from Arabidopsis thaliana (Mouse-ear cress).